Here is an 83-residue protein sequence, read N- to C-terminus: SGHHEHSTDZPSZSSKPCCBHCACTKSIPPQCRCTDLRLDSCHSACKSCICTLSIPAQCVCBBIBDFCYEPCKSSHSDDDNNN.

7 disulfide bridges follow: cysteine 18/cysteine 72, cysteine 19/cysteine 34, cysteine 22/cysteine 68, cysteine 24/cysteine 32, cysteine 42/cysteine 49, cysteine 46/cysteine 61, and cysteine 51/cysteine 59.

The protein belongs to the Bowman-Birk serine protease inhibitor family.

The protein is Bowman-Birk type proteinase inhibitor of Phaseolus lunatus (Lima bean).